Here is a 382-residue protein sequence, read N- to C-terminus: 3-isopropylmalate dehydrogenase (382 aa).

91–102 (GPKWGTGSVRPE) contacts NAD(+). Substrate-binding residues include R109, R119, R148, and D240. D240, D265, and D269 together coordinate Mg(2+). Residue 304-315 (GSAPDLTENKVN) coordinates NAD(+).

The protein belongs to the isocitrate and isopropylmalate dehydrogenases family. Homodimer. The cofactor is Mg(2+). Mn(2+) serves as cofactor.

It is found in the cytoplasm. It carries out the reaction (2R,3S)-3-isopropylmalate + NAD(+) = 4-methyl-2-oxopentanoate + CO2 + NADH. It functions in the pathway amino-acid biosynthesis; L-leucine biosynthesis; L-leucine from 3-methyl-2-oxobutanoate: step 3/4. Its function is as follows. Catalyzes the oxidation of 3-carboxy-2-hydroxy-4-methylpentanoate (3-isopropylmalate) to 3-carboxy-4-methyl-2-oxopentanoate. The product decarboxylates to 4-methyl-2 oxopentanoate. The sequence is that of 3-isopropylmalate dehydrogenase (LEU2) from Debaryomyces hansenii (strain ATCC 36239 / CBS 767 / BCRC 21394 / JCM 1990 / NBRC 0083 / IGC 2968) (Yeast).